We begin with the raw amino-acid sequence, 612 residues long: Apoptosis-inducing factor 1, mitochondrial (612 aa).

2 consecutive short sequence motifs (mitochondrial localization signal) follow at residues 1 to 30 (MFRC…PKQR) and 62 to 88 (KMDN…KTIK). The transit peptide at 1–53 (MFRCGGLAGAFKQKLVPLVRSVCVQRPKQRNRLPGNLFQQWRVPLELQMARQM) directs the protein to the mitochondrion. Propeptides (removed in mature form) lie at residues 54–100 (ASSG…RIMG) and 55–101 (SSGP…IMGL). K108 carries the N6-succinyllysine modification. Residue S115 is modified to Phosphoserine. Residues 133–482 (FLLIGGGTAA…KPYWHQSMFW (350 aa)) form an FAD-dependent oxidoreductase region. Residues 137–141 (GGGTA), 163–164 (ED), R171, and K176 each bind FAD. W195 is an NAD(+) binding site. FAD is bound at residue V232. Residue K254 forms a Glycyl lysine isopeptide (Lys-Gly) (interchain with G-Cter in ubiquitin) linkage. At S267 the chain carries Phosphoserine. FAD is bound at residue R284. NAD(+) is bound by residues 307–310 (GGFL), E335, and K341. Phosphoserine is present on S370. N6-acetyllysine is present on K387. G398 provides a ligand contact to NAD(+). D437 lines the FAD pocket. The short motif at 445–450 (KLGRRR) is the Nuclear localization signal element. Residues 452–453 (EH), W482, and E492 contribute to the NAD(+) site. Residues 453 to 454 (HH) and W482 each bind FAD. Over residues 512–528 (AQDNPKSATEQSGTGIR) the composition is skewed to polar residues. The disordered stretch occupies residues 512–551 (AQDNPKSATEQSGTGIRSESETESEASEITIPPSDPAVPQ). Residue T520 is modified to Phosphothreonine. Residues S523 and S529 each carry the phosphoserine modification. NAD(+) is bound at residue N582. Residue K592 is modified to N6-acetyllysine.

The protein belongs to the FAD-dependent oxidoreductase family. Monomer (oxidized form). Homodimer (reduced form). Upon reduction with NADH, undergoes dimerization and forms tight, long-lived FADH2-NAD charge transfer complexes (CTC) resistant to oxidation. Also dimerizes with isoform 3 preventing its release from mitochondria. Interacts with XIAP/BIRC4. Interacts (via N-terminus) with EIF3G (via C-terminus). Interacts with PRELID1. Interacts with CHCHD4; the interaction increases in presence of NADH. Interacts with processed form of PARP1 (Poly [ADP-ribose] polymerase 1, processed C-terminus); interaction is mediated with poly-ADP-ribose chains attached to PARP1, promoting translocation into the nucleus. Requires FAD as cofactor. Under normal conditions, a 54-residue N-terminal segment is first proteolytically removed during or just after translocation into the mitochondrial intermembrane space (IMS) by the mitochondrial processing peptidase (MPP) to form the inner-membrane-anchored mature form (AIFmit). During apoptosis, it is further proteolytically processed at amino-acid position 101 leading to the generation of the mature form, which is confined to the mitochondrial IMS in a soluble form (AIFsol). AIFsol is released to the cytoplasm in response to specific death signals, and translocated to the nucleus, where it induces nuclear apoptosis in a caspase-independent manner. In terms of processing, ubiquitination by XIAP/BIRC4 does not lead to proteasomal degradation. Ubiquitination at Lys-254 by XIAP/BIRC4 blocks its ability to bind DNA and induce chromatin degradation, thereby inhibiting its ability to induce cell death.

The protein resides in the mitochondrion intermembrane space. The protein localises to the mitochondrion inner membrane. It is found in the cytoplasm. It localises to the nucleus. Its subcellular location is the perinuclear region. The catalysed reaction is A + NADH + H(+) = AH2 + NAD(+). Functions both as NADH oxidoreductase and as regulator of apoptosis. In response to apoptotic stimuli, it is released from the mitochondrion intermembrane space into the cytosol and to the nucleus, where it functions as a proapoptotic factor in a caspase-independent pathway. Release into the cytoplasm is mediated upon binding to poly-ADP-ribose chains. The soluble form (AIFsol) found in the nucleus induces 'parthanatos' i.e. caspase-independent fragmentation of chromosomal DNA. Binds to DNA in a sequence-independent manner. Interacts with EIF3G, and thereby inhibits the EIF3 machinery and protein synthesis, and activates caspase-7 to amplify apoptosis. Plays a critical role in caspase-independent, pyknotic cell death in hydrogen peroxide-exposed cells. In contrast, participates in normal mitochondrial metabolism. Plays an important role in the regulation of respiratory chain biogenesis by interacting with CHCHD4 and controlling CHCHD4 mitochondrial import. In Rattus norvegicus (Rat), this protein is Apoptosis-inducing factor 1, mitochondrial (Aifm1).